A 122-amino-acid chain; its full sequence is Large ribosomal subunit protein uL14c (122 aa).

Belongs to the universal ribosomal protein uL14 family. Part of the 50S ribosomal subunit.

Its subcellular location is the plastid. It is found in the cyanelle. Binds to 23S rRNA. This chain is Large ribosomal subunit protein uL14c, found in Cyanophora paradoxa.